The following is a 318-amino-acid chain: Ubiquitin-like domain-containing CTD phosphatase 1 (318 aa).

Alanine 2 carries the post-translational modification N-acetylalanine. Positions 3–81 constitute a Ubiquitin-like domain; the sequence is LPIIVKWGGQ…IMMMGTREES (79 aa). Lysine 117 is modified (N6-acetyllysine). Positions 133–294 constitute an FCP1 homology domain; sequence PREGKKLLVL…LKLTQYLKEI (162 aa). Residues aspartate 143, aspartate 145, and aspartate 253 each contribute to the Mg(2+) site.

It depends on Mg(2+) as a cofactor.

Its subcellular location is the nucleus. The enzyme catalyses O-phospho-L-seryl-[protein] + H2O = L-seryl-[protein] + phosphate. It catalyses the reaction O-phospho-L-threonyl-[protein] + H2O = L-threonyl-[protein] + phosphate. Dephosphorylates 26S nuclear proteasomes, thereby decreasing their proteolytic activity. Recruited to the 19S regulatory particle of the 26S proteasome through its interaction with 19S component PSMD2/RPN1. Once recruited, dephosphorylates 19S component PSMC2/RPT1 which impairs PSMC2 ATPase activity and disrupts 26S proteasome assembly. Has also been reported to stimulate the proteolytic activity of the 26S proteasome. This is Ubiquitin-like domain-containing CTD phosphatase 1 (UBLCP1) from Bos taurus (Bovine).